A 210-amino-acid polypeptide reads, in one-letter code: Prolactin (210 aa).

The N-terminal stretch at 1–23 (MTQGSRLYFAVAVLMCGFVSING) is a signal peptide. Disulfide bonds link C69/C183 and C200/C210.

It belongs to the somatotropin/prolactin family. As to expression, pituitary gland.

It is found in the secreted. In Carassius auratus (Goldfish), this protein is Prolactin (prl1).